Consider the following 1086-residue polypeptide: MFRIFFTLLIIILIKKTSAIDLIEGIFYEKNEIDKLTFSLDHRVRDNLKTDLILNNNGENDYAYLNKYVYTILNRDSTEKIKTFFSHNKDMKSCDYFISKEYNSSDKTNQICYKKTFCGVVIPNSEEIKTNKITNDKLYCAHFNSTHIIIYYISQPLLLEPHVVYEETFFEKGKNDQINCQGMYISLRSVHVHTHNAILQQETLTYIKNLCDGKNNCKFDFDSIKYENKSLTHYLFFINIQYQCISPLNLQENEMCDVYNDDTHKATCKYGFNKIELLKNVCEENYRCTQDICSVNQFCDGENETCTCKTSLLPSAKNNCEYNDLCTVLNCPENSTCEQIGNGKKAECKCENGKYYHNNKCYTKNDLELAIKIEPHKKEKFYKNNLYQGKALKPEYIFMQCENGFSIEVINAYVSCYRVSFNLNKLKYVTESLKKMCDGKTKCAYGNTIDPIDDLNHHNICNNFNTIFKYDYLCVFNNQNITSDKNSHLHSNIPSLYNSSILPDINKSKFHLISRNSRTNQYPHNNISMLEIQNEISSHNSNQFSTDPHTNSNNINNMNIKKVEIFRSRFSSKLQCQGGKINIDKAILKGGEGCNDLLLTNSLKSYCNDLSECDIGLIYHFDTYCINDQYLFVSYSCSNLCNKCHNNSTCYGNRFNYDCFCDNPYISKYGNKLCERPNDCESVLCSQNQVCQILPNDKLICQCEEGYKNVKGKCVPDNKCDLSCPSNKVCVIENGKQTCKCSERFVLENGVCICANDYKMEDGINCIAKNKCKRKEYENICTNPNEMCAYNEETDIVKCECKEHYYRSSRGECILNDYCKDINCKENEECSIVNFKPECVCKENLKKNNKGECIYENSCLINEGNCPKDSKCIYREYKPHECVCNKQGHVAVNGKCVLEDKCVHNKKCSENSICVNVMNKEPICVCTYNYYKKDGVCLIQNPCLKDNGGCSRNSECTFKYSKINCTCKENYKNKDDSCVPNTNEYDESFTFQYNDDASIILGACGMIEFSYIYNQIIWKINNSKESYVFYYDYPTAGNIEVQIKNEIFHTIIYLKKKIGNSVIYDDFQVDHQTCIYENVFYYSNQN.

The first 19 residues, 1-19 (MFRIFFTLLIIILIKKTSA), serve as a signal peptide directing secretion. N-linked (GlcNAc...) asparagine glycans are attached at residues asparagine 103, asparagine 144, asparagine 228, asparagine 303, asparagine 334, asparagine 480, asparagine 498, asparagine 506, asparagine 526, and asparagine 646. 2 consecutive EGF-like domains span residues 287–321 (RCTQ…NNCE) and 325–362 (LCTV…NKCY). EGF-like domains are found at residues 636–675 (SCSN…KLCE), 679–715 (DCES…GKCV), 719–753 (KCDL…GVCI), 818–854 (YCKD…GECI), 858–897 (SCLI…GKCV), 901–938 (KCVH…GVCL), and 942–979 (PCLK…DSCV). Asparagine 964 and asparagine 1021 each carry an N-linked (GlcNAc...) asparagine glycan.

As to quaternary structure, component of the PfRH5 adhesion complex composed of 1 copy of CyRPA, RH5 and RIPR; the complex is formed during merozoite invasion of host erythrocytes specifically at the interface between the parasite and host membranes. Within the complex, interacts with CyRPA. CyRPA recruitment of RIPR to RH5-P113-BSG leads to the formation of the PfRH5 adhesion complex which probably in turn releases RH5 from P113 while maintaining the interaction of the PfRH5 adhesion complex with BSG. Proteolytically cleaved into two chains of 125kDa and 65kDa which remain associated. The cleavage occurs at the schizont stage prior to the release of merozoites. In terms of processing, contains disulfide bonds.

It localises to the secreted. Its subcellular location is the cytoplasmic vesicle. The protein localises to the secretory vesicle. It is found in the microneme lumen. The protein resides in the cell membrane. It localises to the host cell membrane. Its function is as follows. Essential for the invasion of host erythrocytes by blood stage merozoites. As part of the PfRH5 adhesion complex, facilitates the interaction of RH5 and human BSG required for the Ca(2+) release into the erythrocyte. The chain is Rh5-interacting protein (RIPR) from Plasmodium falciparum (isolate 3D7).